A 169-amino-acid polypeptide reads, in one-letter code: Protein yop1 (169 aa).

Residues 1–35 lie on the Cytoplasmic side of the membrane; that stretch reads MASFQDRAQHTIAQLDKELSKYPVLNNLERQTSVP. The chain crosses the membrane as a helical span at residues 36–55; sequence KVYVILGLGGIYTFLVFFNI. Residue Ala56 is a topological domain, lumenal. A helical membrane pass occupies residues 57 to 76; the sequence is GQLLVNLAGFILPTYYSLDA. At 77–88 the chain is on the cytoplasmic side; it reads LFSAGKADDTQW. Residues 89–103 traverse the membrane as a helical segment; the sequence is LTYWVVYAFFTVVES. Residues 104–105 are Lumenal-facing; the sequence is AI. A helical transmembrane segment spans residues 106–124; it reads SAPYWFPFYYIFKFALVLW. The Cytoplasmic portion of the chain corresponds to 125–169; it reads LALPQTNGAQIVFKSLVQPLVGRYFTGGSTSANLRAQADAATKSQ.

The protein belongs to the DP1 family. In terms of assembly, oligomer.

The protein localises to the endoplasmic reticulum membrane. It is found in the golgi apparatus membrane. Required to generate and maintain the structure of the tubular endoplasmic reticulum network and the vacuole. Induces high curvature in membranes and causes membrane tubule formation. Involved in membrane/vesicle trafficking. The protein is Protein yop1 (yop1) of Emericella nidulans (strain FGSC A4 / ATCC 38163 / CBS 112.46 / NRRL 194 / M139) (Aspergillus nidulans).